The chain runs to 1025 residues: Leucyl-cystinyl aminopeptidase (1025 aa).

An N-acetylmethionine modification is found at methionine 1. Residues 1–109 (METFTNDRLQ…DGTCSVPSAR (109 aa)) lie on the Cytoplasmic side of the membrane. A Dileucine internalization motif motif is present at residues 53–54 (LL). Tyrosine 70 carries the phosphotyrosine modification. The short motif at 76–77 (LL) is the Dileucine internalization motif element. Residues serine 80 and serine 91 each carry the phosphoserine; by PKC/PRKCZ; in vitro modification. Positions 96 to 101 (RQSPDG) are tankyrase binding. The helical; Signal-anchor for type II membrane protein transmembrane segment at 110 to 131 (TLVICVFVIVVAVSVIMVIYLL) threads the bilayer. At 132 to 1025 (PRCTFTKEGC…RNLKTLTLWL (894 aa)) the chain is on the extracellular side. N-linked (GlcNAc...) asparagine glycans are attached at residues asparagine 145, asparagine 184, asparagine 215, asparagine 256, and asparagine 266. Glutamate 295 provides a ligand contact to substrate. Residues asparagine 368 and asparagine 374 are each glycosylated (N-linked (GlcNAc...) asparagine). 428–432 (GAMEN) contributes to the substrate binding site. N-linked (GlcNAc...) asparagine glycosylation occurs at asparagine 447. Histidine 464 is a Zn(2+) binding site. Glutamate 465 (proton acceptor) is an active-site residue. The Zn(2+) site is built by histidine 468 and glutamate 487. Asparagine 525, asparagine 578, asparagine 664, asparagine 682, asparagine 695, asparagine 758, asparagine 834, asparagine 850, and asparagine 989 each carry an N-linked (GlcNAc...) asparagine glycan.

The protein belongs to the peptidase M1 family. In terms of assembly, homodimer. Binds tankyrases 1 and 2. Zn(2+) is required as a cofactor. N-glycosylated. As to expression, highly expressed in heart, brain, spleen, lung, kidney and white adipose tissue. Detected at lower levels in skeletal muscle and liver.

Its subcellular location is the cell membrane. It is found in the endomembrane system. It carries out the reaction Release of an N-terminal amino acid, Cys-|-Xaa-, in which the half-cystine residue is involved in a disulfide loop, notably in oxytocin or vasopressin. Hydrolysis rates on a range of aminoacyl arylamides exceed that for the cystinyl derivative, however.. Release of an N-terminal amino acid, cleave before cysteine, leucine as well as other amino acids. Degrades peptide hormones such as oxytocin, vasopressin and angiotensin III, and plays a role in maintaining homeostasis during pregnancy. May be involved in the inactivation of neuronal peptides in the brain. Cleaves Met-enkephalin and dynorphin. Binds angiotensin IV and may be the angiotensin IV receptor in the brain. The polypeptide is Leucyl-cystinyl aminopeptidase (Lnpep) (Rattus norvegicus (Rat)).